Reading from the N-terminus, the 538-residue chain is Calcium-dependent protein kinase 3 (538 aa).

Positions 23 to 70 (PKKSIERIKKKKDSNKSIKSQHKFEGSKISNKNNELKDVKSKDPKNYE) are disordered. The segment covering 56 to 68 (NELKDVKSKDPKN) has biased composition (basic and acidic residues). The 256-residue stretch at 112 to 367 (NLSEEPLGKG…ASEALKHPWF (256 aa)) folds into the Protein kinase domain. ATP is bound by residues 118 to 126 (LGKGTYGCV) and lysine 141. The active-site Proton acceptor is aspartate 232. A J domain autoinhibitory motif motif is present at residues 387 to 395 (NFKNYALLL). Residues 387-422 (NFKNYALLLKLQKLAMTIIAQQSNDYDLQQLKAVFL) are j domain. The J domain EF-hand interaction motif signature appears at 396–405 (KLQKLAMTII). 3 consecutive EF-hand domains span residues 412–447 (YDLQ…SGLK), 450–481 (QNFD…DRKH), and 482–517 (LSKK…VILF). Residues aspartate 460, aspartate 462, serine 464, arginine 466, glutamate 471, aspartate 495, aspartate 497, aspartate 499, glutamate 501, and glutamate 506 each coordinate Ca(2+).

This sequence belongs to the protein kinase superfamily. Ser/Thr protein kinase family. CDPK subfamily. The cofactor is Mg(2+).

The protein localises to the cytoplasm. The catalysed reaction is L-seryl-[protein] + ATP = O-phospho-L-seryl-[protein] + ADP + H(+). It catalyses the reaction L-threonyl-[protein] + ATP = O-phospho-L-threonyl-[protein] + ADP + H(+). Activated by calcium. Upon calcium binding to the EF-hand domain 2, the C-terminus of the junction domain (J domain) undergoes a conformational change which results in the dissociation of the pseudo-substrate inhibitory motif from the catalytic domain. This, in turn, may facilitate the autophosphorylation of the activation loop at Thr-273, which leads to the kinase activation. Calcium-dependent protein kinase which acts as a sensor and effector of intracellular Ca(2+) levels probably in part downstream of cGMP-activated PKG kinase. In the mosquito midgut, regulates the gliding motility of the ookinete which is essential for the ookinete to invade the midgut epithelium. However, another study showed that while required for ookinete invasion of the midgut epithelium, is not required for ookinete gliding motility. The polypeptide is Calcium-dependent protein kinase 3 (Plasmodium yoelii yoelii).